A 118-amino-acid polypeptide reads, in one-letter code: Phage-like element PBSX protein XkdH (118 aa).

It to B.subtilis YqbH.

This is Phage-like element PBSX protein XkdH (xkdH) from Bacillus subtilis (strain 168).